The sequence spans 630 residues: tRNA uridine 5-carboxymethylaminomethyl modification enzyme MnmG (630 aa).

Glycine 15–glycine 20 contacts FAD. Glycine 274–phenylalanine 288 serves as a coordination point for NAD(+).

This sequence belongs to the MnmG family. Homodimer. Heterotetramer of two MnmE and two MnmG subunits. Requires FAD as cofactor.

The protein localises to the cytoplasm. NAD-binding protein involved in the addition of a carboxymethylaminomethyl (cmnm) group at the wobble position (U34) of certain tRNAs, forming tRNA-cmnm(5)s(2)U34. The chain is tRNA uridine 5-carboxymethylaminomethyl modification enzyme MnmG from Alkaliphilus oremlandii (strain OhILAs) (Clostridium oremlandii (strain OhILAs)).